The following is a 354-amino-acid chain: Uroporphyrinogen decarboxylase (354 aa).

Substrate contacts are provided by residues 27 to 31 (RQAGR), aspartate 77, tyrosine 154, serine 209, and histidine 327.

Belongs to the uroporphyrinogen decarboxylase family. In terms of assembly, homodimer.

It localises to the cytoplasm. It catalyses the reaction uroporphyrinogen III + 4 H(+) = coproporphyrinogen III + 4 CO2. It participates in porphyrin-containing compound metabolism; protoporphyrin-IX biosynthesis; coproporphyrinogen-III from 5-aminolevulinate: step 4/4. Its function is as follows. Catalyzes the decarboxylation of four acetate groups of uroporphyrinogen-III to yield coproporphyrinogen-III. The sequence is that of Uroporphyrinogen decarboxylase from Methylobacillus flagellatus (strain ATCC 51484 / DSM 6875 / VKM B-1610 / KT).